We begin with the raw amino-acid sequence, 834 residues long: Enhancer of filamentation 1 (834 aa).

The SH3 domain occupies 3 to 65 (ARNLMARALY…PGNRVKLLIG (63 aa)). 7 positions are modified to phosphotyrosine: Tyr-92, Tyr-164, Tyr-166, Tyr-177, Tyr-189, Tyr-214, and Tyr-223. Ser-296 carries the post-translational modification Phosphoserine. Position 317 is a phosphotyrosine (Tyr-317). Disordered regions lie at residues 328–402 (PPAE…DKRL) and 584–624 (SQMP…SERS). Positions 332-344 (TSEKANPEERDGV) are enriched in basic and acidic residues. The Caspase cleavage related site signature appears at 360–363 (DVVD). The span at 368–397 (LSFSSTGSTRSNMSTSSTTSKESSVSASPS) shows a compositional bias: low complexity. Ser-369 is subject to Phosphoserine. A divergent helix-loop-helix motif region spans residues 710 to 760 (FYYDQCETHYISLLNAIDALFSCVSSAQPPRIFVAHSKFVILSAHKLVFIG). Positions 710–834 (FYYDQCETHY…KRSLLEMATF (125 aa)) are required for interaction with PLK1. Ser-780 bears the Phosphoserine mark. The residue at position 804 (Thr-804) is a Phosphothreonine.

This sequence belongs to the CAS family. Homodimer. Forms heterodimers with BCAR1/p130cas. Forms complexes with PTK2B/RAFTK, adapter protein CRKL and LYN kinase. Part of a complex composed of NEDD9, AURKA and CTTN; within the complex NEDD9 acts as a scaffold protein and is required for complex formation. Part of a ternary complex composed of SMAD3, ITCH/AIP4 and NEDD9/HEF1; within the complex NEDD9/HEF1 interacts (via N-terminus) with ITCH/AIP4; the complex mediates ubiquitination and proteasomal degradation of NEDD9/HEF1. Interacts with ID2. Interacts with CTTN (via N-terminus). Interacts with MICAL. Interacts with TXNL4/DIM1. Interacts with BCAR3 (via Ras-GEF domain). Interacts with SH2D3C isoform 1 and isoform 2. Interacts with BCAR3. Interacts with ECT2. Interacts with PTPN11/SHP-2 (via SH2 domains); the interaction is enhanced when NEDD9/CAS-L is tyrosine phosphorylated. Interacts (via C-terminus) with PLK1 (via polo box domain). Interacts with NKX2-5. Interacts with SMAD3; the interaction is inhibited by oxidation of NEDD9. Interacts with ABL1; interaction is induced by CXCL12-mediated phosphorylation of NEDD/HEF1. Interacts (via SH3 domain) with PTK2/FAK. Interacts with FYN; in the presence of PTK2. Interacts with INPPL1/SHIP2. Post-translationally, polyubiquitinated by ITCH/AIP4, leading to proteasomal degradation. PTK2/FAK1 phosphorylates the protein at the YDYVHL motif (conserved among all cas proteins) following integrin stimulation. The SRC family kinases (FYN, SRC, LCK and CRK) are recruited to the phosphorylated sites and can phosphorylate other tyrosine residues. Ligation of either integrin beta-1 or B-cell antigen receptor on tonsillar B-cells and B-cell lines promotes tyrosine phosphorylation and both integrin and BCR-mediated tyrosine phosphorylation requires an intact actin network. Phosphorylation is required to recruit NEDD9 to T-cell receptor microclusters at the periphery of newly formed immunological synapses. In fibroblasts transformation with oncogene v-ABL results in an increase in tyrosine phosphorylation. Transiently phosphorylated following CD3 cross-linking and this phosphorylated form binds to CRKL and C3G. A mutant lacking the SH3 domain is phosphorylated upon CD3 cross-linking but not upon integrin beta-1 cross-linking. Tyrosine phosphorylation occurs upon stimulation of the G-protein coupled C1a calcitonin receptor. Calcitonin-stimulated tyrosine phosphorylation is mediated by calcium- and protein kinase C-dependent mechanisms and requires the integrity of the actin cytoskeleton. Phosphorylation at Ser-369 induces proteasomal degradation. Phosphorylated by LYN. Phosphorylation at Ser-780 by CSNK1D or CSNK1E, or phosphorylation of Thr-804 by CSNK1E enhances the interaction of NEDD9 with PLK1.

It localises to the cytoplasm. It is found in the cell cortex. Its subcellular location is the nucleus. The protein localises to the golgi apparatus. The protein resides in the cell projection. It localises to the lamellipodium. It is found in the cell junction. Its subcellular location is the focal adhesion. The protein localises to the cytoskeleton. The protein resides in the spindle pole. It localises to the cilium. It is found in the cilium basal body. Its subcellular location is the basolateral cell membrane. Functionally, negatively regulates embryonic fibroblast migration. May play an important role in integrin beta-1 or B cell antigen receptor (BCR) mediated signaling in B- and T-cells. Integrin beta-1 stimulation leads to recruitment of various proteins including CRKl and SHPTP2 to the tyrosine phosphorylated form. Promotes adhesion and migration of lymphocytes; as a result required for the correct migration of lymphocytes to the spleen and other secondary lymphoid organs. Plays a role in the organization of T-cell F-actin cortical cytoskeleton and the centralization of T-cell receptor microclusters at the immunological synapse. Negatively regulates cilia outgrowth in polarized cysts. Modulates cilia disassembly via activation of AURKA-mediated phosphorylation of HDAC6 and subsequent deacetylation of alpha-tubulin. In conjunction with NKX2-5, positively regulates transcription of genes such as COL3A1 and MMP2, resulting in increased pulmonary endothelial fibrosis in response to hypoxia. Positively regulates RANKL-induced osteoclastogenesis. Required for the maintenance of hippocampal dendritic spines in the dentate gyrus and CA1 regions, thereby involved in spatial learning and memory. The sequence is that of Enhancer of filamentation 1 from Canis lupus familiaris (Dog).